Reading from the N-terminus, the 306-residue chain is Curved DNA-binding protein (306 aa).

The J domain maps to 5–69; the sequence is DYYAIMGVKP…QRRAEYDQMW (65 aa).

The protein resides in the cytoplasm. It localises to the nucleoid. Its function is as follows. DNA-binding protein that preferentially recognizes a curved DNA sequence. It is probably a functional analog of DnaJ; displays overlapping activities with DnaJ, but functions under different conditions, probably acting as a molecular chaperone in an adaptive response to environmental stresses other than heat shock. Lacks autonomous chaperone activity; binds native substrates and targets them for recognition by DnaK. Its activity is inhibited by the binding of CbpM. The protein is Curved DNA-binding protein of Shigella sonnei (strain Ss046).